The primary structure comprises 360 residues: Peptide chain release factor 1 (360 aa).

N5-methylglutamine is present on Gln235.

The protein belongs to the prokaryotic/mitochondrial release factor family. In terms of processing, methylated by PrmC. Methylation increases the termination efficiency of RF1.

It is found in the cytoplasm. Functionally, peptide chain release factor 1 directs the termination of translation in response to the peptide chain termination codons UAG and UAA. In Burkholderia pseudomallei (strain 1106a), this protein is Peptide chain release factor 1.